Here is a 415-residue protein sequence, read N- to C-terminus: MRPAQDNQGSFLGRISIRRNQFVDVNNEQEQEDLELFQKHIADRFTELLSPPQPPPSDEINTVASVAATEQIMSVTWLRKLMDVFLCCEAEFKAILLMGRDPTQISKPPFDRLVPEMLDRSIKALDICTAVVNGIDSVRHYQRLAEIAVTALEQRPLGDGNVRRAKRALANLVVALSLEDKENVSGGGGGGGGGNKTTERSWSFGRRSGGSSAASKGGATIGQLKSSSWAVGRNWSAAKQIHAMTANLTPPRGNEAAGLPQPMFIMSTVMVFVMWVLTAAVPCQERSGLANHLPVPPKHLNWAQSLIGIHEKIGDEWKKKEKKGSAGLMEEMTRMEKLGHSLMEFADGFHYPAEKDAAESAAVQVAEMAEICRRMEEELVPLQQQIREVFHRIVRSRAEILEVLEQAGKVSAPVV.

A disordered region spans residues 184-219 (VSGGGGGGGGGNKTTERSWSFGRRSGGSSAASKGGA). The span at 185–195 (SGGGGGGGGGN) shows a compositional bias: gly residues. Residues 200-219 (RSWSFGRRSGGSSAASKGGA) are compositionally biased toward low complexity. A helical membrane pass occupies residues 263–283 (MFIMSTVMVFVMWVLTAAVPC).

It belongs to the ROH1 family. In terms of assembly, interacts with EXO70A1 and EXO70C1. Binds to EXO70C2. In terms of tissue distribution, mainly expressed in cells expanding in a polar manner such as pollen and root hairs.

Its subcellular location is the membrane. It is found in the cytoplasm. The protein localises to the cytosol. Required for seed coat mucilage deposition. This is Protein ROH1A from Arabidopsis thaliana (Mouse-ear cress).